Consider the following 457-residue polypeptide: Zinc finger protein ZPR1 (457 aa).

A compositionally biased stretch (polar residues) spans 1–13; that stretch reads MSTVSDPNSSNPP. The interval 1–21 is disordered; that stretch reads MSTVSDPNSSNPPESAGNIRP. 2 C4-type zinc fingers span residues 43–75 and 261–293; these read CMNC…CDHC and CPSC…CGAC. Residues 414–457 form a disordered region; it reads VQSLSDDDSEPDDKLTVERYDRSYEDNEDLGLNDMKTEGYEEKA. Composition is skewed to basic and acidic residues over residues 425-438 and 448-457; these read DDKL…RSYE and MKTEGYEEKA.

This sequence belongs to the ZPR1 family.

Might mediate EGFR and FGFR signal transduction cascades required for lumen formation in tracheal cells. The sequence is that of Zinc finger protein ZPR1 from Drosophila melanogaster (Fruit fly).